We begin with the raw amino-acid sequence, 220 residues long: Early protein OPG038 (220 aa).

The signal sequence occupies residues 1-17 (MVYKLVLLFCIASLGYS). N-linked (GlcNAc...) asparagine; by host glycans are attached at residues Asn-49, Asn-79, Asn-118, and Asn-154.

Belongs to the orthopoxvirus OPG038 family. As to quaternary structure, homooligomer. Interacts with host CD80 and CD86 when secreted. In terms of processing, glycosylated by host.

The protein resides in the host endoplasmic reticulum. It is found in the secreted. Functionally, plays a role in immune evasion. When secreted, inhibits T-cell activation by preventing the binding of host CD80 and CD86 to soluble CTLA4 and CD28. In the infected cell, may inhibits host NF kappa B activation. The chain is Early protein OPG038 (OPG038) from Cynomys gunnisoni (Gunnison's prairie dog).